The following is a 343-amino-acid chain: Thiamine thiazole synthase 4, chloroplastic (343 aa).

Residues Ala89, 109 to 110, Gly117, and Ala182 each bind substrate; that span reads EQ. Residue Cys211 is modified to 2,3-didehydroalanine (Cys). Residues Asp213, His228, Met280, and 290–292 each bind substrate; that span reads RMG.

This sequence belongs to the THI4 family. Homooctamer. The cofactor is Fe cation. During the catalytic reaction, a sulfide is transferred from Cys-211 to a reaction intermediate, generating a dehydroalanine residue.

It is found in the plastid. It localises to the chloroplast. It carries out the reaction [ADP-thiazole synthase]-L-cysteine + glycine + NAD(+) = [ADP-thiazole synthase]-dehydroalanine + ADP-5-ethyl-4-methylthiazole-2-carboxylate + nicotinamide + 3 H2O + 2 H(+). Functionally, involved in biosynthesis of the thiamine precursor thiazole. Catalyzes the conversion of NAD and glycine to adenosine diphosphate 5-(2-hydroxyethyl)-4-methylthiazole-2-carboxylic acid (ADT), an adenylated thiazole intermediate. The reaction includes an iron-dependent sulfide transfer from a conserved cysteine residue of the protein to a thiazole intermediate. The enzyme can only undergo a single turnover, which suggests it is a suicide enzyme. May have additional roles in adaptation to various stress conditions and in DNA damage tolerance. This is Thiamine thiazole synthase 4, chloroplastic from Physcomitrium patens (Spreading-leaved earth moss).